The sequence spans 149 residues: Large ribosomal subunit protein uL15 (149 aa).

A disordered region spans residues 8–49; that stretch reads HDLRPAAGSNKPKTRVGRGEASKGKTAGRGTKGTGARKQVPA. Over residues 31 to 45 the composition is skewed to low complexity; the sequence is GKTAGRGTKGTGARK.

The protein belongs to the universal ribosomal protein uL15 family. In terms of assembly, part of the 50S ribosomal subunit.

Binds to the 23S rRNA. This is Large ribosomal subunit protein uL15 from Corynebacterium aurimucosum (strain ATCC 700975 / DSM 44827 / CIP 107346 / CN-1) (Corynebacterium nigricans).